Here is a 784-residue protein sequence, read N- to C-terminus: Kinesin-like protein Klp68D (784 aa).

The Kinesin motor domain maps to Cys-19–Ile-344. Gly-106–Thr-113 lines the ATP pocket. A coiled-coil region spans residues Asn-351 to Val-385. Disordered regions lie at residues Arg-371–Arg-449, Lys-605–Leu-652, and Ile-742–Lys-784. The segment covering Thr-386–Lys-396 has biased composition (basic residues). Over residues Pro-416–Ser-428 the composition is skewed to acidic residues. A coiled-coil region spans residues Ala-426–Phe-582. Positions Glu-429–Arg-449 are enriched in basic and acidic residues. The segment covering Ser-622–Arg-634 has biased composition (basic residues). Over residues Lys-769–Ala-778 the composition is skewed to low complexity.

It belongs to the TRAFAC class myosin-kinesin ATPase superfamily. Kinesin family. Kinesin II subfamily. Expressed primarily in the central nervous system and in a subset of the peripheral nervous system during embryogenesis.

The protein resides in the cytoplasm. It is found in the cytoskeleton. In terms of biological role, plus-end directed microtubule motor that may be used for anterograde axonal transport and could conceivably move cargos in fly neurons different than those moved by kinesin heavy chain or other plus-end directed motors. The protein is Kinesin-like protein Klp68D (Klp68D) of Drosophila melanogaster (Fruit fly).